Here is a 90-residue protein sequence, read N- to C-terminus: DNA-binding protein HU-alpha (90 aa).

Belongs to the bacterial histone-like protein family. As to quaternary structure, heterodimer of an alpha and a beta chain.

Its function is as follows. Histone-like DNA-binding protein which is capable of wrapping DNA to stabilize it, and thus to prevent its denaturation under extreme environmental conditions. The polypeptide is DNA-binding protein HU-alpha (hupA) (Escherichia coli O157:H7).